Here is a 482-residue protein sequence, read N- to C-terminus: Transcription initiation factor IIE subunit alpha (482 aa).

Positions 9–99 (VKNLLKFVVR…KYPHAIDAIK (91 aa)) constitute an HTH TFE/IIEalpha-type domain. Residues 124–152 (CPICLTKYTQLEAVQLLNFDRTEFLCSLC) form a C4-type zinc finger. Over residues 274-286 (RELQERQAEEKRK) the composition is skewed to basic and acidic residues. 2 disordered regions span residues 274–295 (RELQ…EWHK) and 321–482 (AMDS…FEDV). Residues 321–345 (AMDSINPDNEPAQETSYQNNRTLTE) show a composition bias toward polar residues. Residues 374–401 (EEEEEEEEEEDEEEEEEEEMEDVMDDND) show a composition bias toward acidic residues. The segment covering 419–432 (TAGTAKTESNTSND) has biased composition (polar residues). A compositionally biased stretch (basic and acidic residues) spans 433 to 444 (VKQESINDKTED). Positions 464–482 (GDDDDDDDDDEMDIEFEDV) are enriched in acidic residues.

The protein belongs to the TFIIE alpha subunit family. In terms of assembly, TFIIE is a tetramer of two alpha (TFA1) and two beta (TFA2) subunits.

It is found in the nucleus. In terms of biological role, recruits TFIIH to the initiation complex and stimulates the RNA polymerase II C-terminal domain kinase and DNA-dependent ATPase activities of TFIIH. Both TFIIH and TFIIE are required for promoter clearance by RNA polymerase. This chain is Transcription initiation factor IIE subunit alpha (TFA1), found in Saccharomyces cerevisiae (strain ATCC 204508 / S288c) (Baker's yeast).